Consider the following 264-residue polypeptide: Diphthine synthase (264 aa).

Residues Leu-10, Asp-87, Val-90, 115 to 116, Leu-166, Ala-209, and His-234 each bind S-adenosyl-L-methionine; that span reads SI.

Belongs to the diphthine synthase family. As to quaternary structure, homodimer.

It catalyses the reaction 2-[(3S)-amino-3-carboxypropyl]-L-histidyl-[translation elongation factor 2] + 3 S-adenosyl-L-methionine = diphthine-[translation elongation factor 2] + 3 S-adenosyl-L-homocysteine + 3 H(+). It functions in the pathway protein modification; peptidyl-diphthamide biosynthesis. Functionally, S-adenosyl-L-methionine-dependent methyltransferase that catalyzes the trimethylation of the amino group of the modified target histidine residue in translation elongation factor 2 (EF-2), to form an intermediate called diphthine. The three successive methylation reactions represent the second step of diphthamide biosynthesis. This chain is Diphthine synthase, found in Thermococcus gammatolerans (strain DSM 15229 / JCM 11827 / EJ3).